A 357-amino-acid polypeptide reads, in one-letter code: Protein ATP1B4 (357 aa).

Topologically, residues 1–110 (MRRQLRSRRA…FLARTGQSWS (110 aa)) are nuclear. The disordered stretch occupies residues 15-80 (YSYRYRLDDP…EEGQGQPTGN (66 aa)). A compositionally biased stretch (acidic residues) spans 52–73 (EEEEEEEEKEEEEEEEKEEEEG). A helical; Signal-anchor for type II membrane protein membrane pass occupies residues 111 to 131 (LILLIYFFFYASLAAVITLCM). The Perinuclear space portion of the chain corresponds to 132–357 (YTLFLTISPY…RVIFTLNIET (226 aa)).

Belongs to the X(+)/potassium ATPases subunit beta family. As to quaternary structure, associates with a SMAD7-transcriptional complex. Interacts with SNW1 and TOR1AIP1. According to PubMed:17592128, does not associate with known Na,K-ATPase alpha-subunits. Highly expressed in skeletal muscle and at a lower level in heart.

It localises to the nucleus inner membrane. In terms of biological role, may act as a transcriptional coregulator during muscle development through its interaction with SNW1. Has lost its ancestral function as a Na,K-ATPase beta-subunit. This Homo sapiens (Human) protein is Protein ATP1B4 (ATP1B4).